We begin with the raw amino-acid sequence, 328 residues long: Nickel import system permease protein NikB (328 aa).

Helical transmembrane passes span 11 to 31 (LMQM…LMKL), 104 to 124 (LLIS…LGII), 139 to 159 (VIST…LLFI), 170 to 190 (ILSQ…AYII), 229 to 249 (ILPI…GTVV), and 279 to 299 (VLFI…LTLL). The ABC transmembrane type-1 domain maps to 100–297 (APITLLISFS…IINTIADLLT (198 aa)).

Belongs to the binding-protein-dependent transport system permease family. OppBC subfamily. The complex is composed of two ATP-binding proteins (NikD and NikE), two transmembrane proteins (NikB and NikC) and a solute-binding protein (NikA).

Its subcellular location is the cell membrane. In terms of biological role, part of the ABC transporter complex NikABCDE (Opp2) involved in nickel import. Probably responsible for the translocation of the substrate across the membrane. This chain is Nickel import system permease protein NikB, found in Staphylococcus aureus (strain Mu50 / ATCC 700699).